Consider the following 541-residue polypeptide: Ankyrin repeat domain-containing protein 13C (541 aa).

Basic and acidic residues predominate over residues 1–20 (MTGEKIRSLRRDHKPSKEDG). Positions 1–53 (MTGEKIRSLRRDHKPSKEDGDVLEPCEEEATAALGGAFTGGRSGPGGSGKGGK) are disordered. Residues 21–30 (DVLEPCEEEA) are compositionally biased toward acidic residues. Residues 37–52 (AFTGGRSGPGGSGKGG) show a composition bias toward gly residues. 3 ANK repeats span residues 111–142 (PSLY…QKDN), 143–172 (HGNT…PVKV), and 176–205 (QGWS…QQSR). Phosphoserine is present on Ser411.

The protein resides in the endoplasmic reticulum membrane. In terms of biological role, acts as a molecular chaperone for G protein-coupled receptors, regulating their biogenesis and exit from the ER. The sequence is that of Ankyrin repeat domain-containing protein 13C (Ankrd13c) from Mus musculus (Mouse).